A 469-amino-acid chain; its full sequence is NADH-quinone oxidoreductase subunit N (469 aa).

14 consecutive transmembrane segments (helical) span residues 2–22 (IALL…FLCV), 28–48 (RYSI…FFIV), 70–90 (FSFC…ISSF), 101–121 (EMFA…LSVE), 122–142 (LILT…MIAM), 157–177 (FLLS…VFGV), 194–214 (FLSI…IAIF), 233–253 (GFLA…LCFL), 261–281 (ILQG…NLLS), 290–310 (ILIA…SSVG), 315–335 (IYPA…LFAI), 361–381 (AFAF…VGFL), 398–418 (LAIF…KIII), and 447–467 (ILFI…LNLF).

This sequence belongs to the complex I subunit 2 family. In terms of assembly, NDH-1 is composed of 14 different subunits. Subunits NuoA, H, J, K, L, M, N constitute the membrane sector of the complex.

The protein localises to the cell inner membrane. The enzyme catalyses a quinone + NADH + 5 H(+)(in) = a quinol + NAD(+) + 4 H(+)(out). In terms of biological role, NDH-1 shuttles electrons from NADH, via FMN and iron-sulfur (Fe-S) centers, to quinones in the respiratory chain. The immediate electron acceptor for the enzyme in this species is believed to be ubiquinone. Couples the redox reaction to proton translocation (for every two electrons transferred, four hydrogen ions are translocated across the cytoplasmic membrane), and thus conserves the redox energy in a proton gradient. The sequence is that of NADH-quinone oxidoreductase subunit N from Campylobacter fetus subsp. fetus (strain 82-40).